A 396-amino-acid chain; its full sequence is MNWYELYWQRITPLHLFLWPVSQLLILFQSVRRFLYRRAILTSIHLPVPIIIIDSITTDSPVKTSLIIQIANILKAAGLRPGIISRGYPDNHRPPTRVTISSHPHLTGEKSLLLTYHLRETCPVWIGYDRIETAKALLNAHKECNVLICDDGLQDLRLQRDFEAVIVDTSVINSGNGLIMPAGPLRDSFARLKHTDAVILAGHQRRIPDITDEIRTIHTRPQKEHFFNLSWPELTADAAGLAGKRIHAIVCDPDTQNFLDNLEFLKLTVTPRVFPENHHFIATDFQSDEAEIILIPEEDAVKCLSLHDDRIWVLQQEYRVDPGLREIILKKLREKFMDPKLLDILVCPLCKGSLIYKKDRLELICKADRLAYPIRDGIPVMLEDEARKLPDEEEIK.

The interval 1–336 (MNWYELYWQR…IILKKLREKF (336 aa)) is tetraacyldisaccharide 4'-kinase. The interval 337-396 (MDPKLLDILVCPLCKGSLIYKKDRLELICKADRLAYPIRDGIPVMLEDEARKLPDEEEIK) is UPF0434.

In the N-terminal section; belongs to the LpxK family. This sequence in the C-terminal section; belongs to the UPF0434 family.

It carries out the reaction a lipid A disaccharide + ATP = a lipid IVA + ADP + H(+). Its pathway is glycolipid biosynthesis; lipid IV(A) biosynthesis; lipid IV(A) from (3R)-3-hydroxytetradecanoyl-[acyl-carrier-protein] and UDP-N-acetyl-alpha-D-glucosamine: step 6/6. Transfers the gamma-phosphate of ATP to the 4'-position of a tetraacyldisaccharide 1-phosphate intermediate (termed DS-1-P) to form tetraacyldisaccharide 1,4'-bis-phosphate (lipid IVA). In Nitrosomonas europaea (strain ATCC 19718 / CIP 103999 / KCTC 2705 / NBRC 14298), this protein is Tetraacyldisaccharide 4'-kinase (lpxK).